Here is a 328-residue protein sequence, read N- to C-terminus: D-cysteine desulfhydrase (328 aa).

An N6-(pyridoxal phosphate)lysine modification is found at Lys-51.

It belongs to the ACC deaminase/D-cysteine desulfhydrase family. As to quaternary structure, homodimer. Pyridoxal 5'-phosphate serves as cofactor.

It catalyses the reaction D-cysteine + H2O = hydrogen sulfide + pyruvate + NH4(+) + H(+). In terms of biological role, catalyzes the alpha,beta-elimination reaction of D-cysteine and of several D-cysteine derivatives. It could be a defense mechanism against D-cysteine. The polypeptide is D-cysteine desulfhydrase (Escherichia coli O157:H7).